The sequence spans 416 residues: Meiotically up-regulated protein PB1A10.08 (416 aa).

The protein resides in the cytoplasm. May have a role in meiosis and sporulation. The polypeptide is Meiotically up-regulated protein PB1A10.08 (Schizosaccharomyces pombe (strain 972 / ATCC 24843) (Fission yeast)).